Here is a 158-residue protein sequence, read N- to C-terminus: NAD(P)H-quinone oxidoreductase subunit J, chloroplastic (158 aa).

The protein belongs to the complex I 30 kDa subunit family. As to quaternary structure, NDH is composed of at least 16 different subunits, 5 of which are encoded in the nucleus.

The protein resides in the plastid. It is found in the chloroplast thylakoid membrane. It carries out the reaction a plastoquinone + NADH + (n+1) H(+)(in) = a plastoquinol + NAD(+) + n H(+)(out). The catalysed reaction is a plastoquinone + NADPH + (n+1) H(+)(in) = a plastoquinol + NADP(+) + n H(+)(out). Its function is as follows. NDH shuttles electrons from NAD(P)H:plastoquinone, via FMN and iron-sulfur (Fe-S) centers, to quinones in the photosynthetic chain and possibly in a chloroplast respiratory chain. The immediate electron acceptor for the enzyme in this species is believed to be plastoquinone. Couples the redox reaction to proton translocation, and thus conserves the redox energy in a proton gradient. This Citrus sinensis (Sweet orange) protein is NAD(P)H-quinone oxidoreductase subunit J, chloroplastic.